Reading from the N-terminus, the 201-residue chain is 3-isopropylmalate dehydratase small subunit (201 aa).

It belongs to the LeuD family. LeuD type 1 subfamily. In terms of assembly, heterodimer of LeuC and LeuD.

It catalyses the reaction (2R,3S)-3-isopropylmalate = (2S)-2-isopropylmalate. Its pathway is amino-acid biosynthesis; L-leucine biosynthesis; L-leucine from 3-methyl-2-oxobutanoate: step 2/4. Functionally, catalyzes the isomerization between 2-isopropylmalate and 3-isopropylmalate, via the formation of 2-isopropylmaleate. This chain is 3-isopropylmalate dehydratase small subunit, found in Rhodopseudomonas palustris (strain BisB18).